A 650-amino-acid polypeptide reads, in one-letter code: GATA zinc finger domain-containing protein 11 (650 aa).

Residues 16–79 (LYNNTNTNSN…NSSNSLSSSF (64 aa)) show a composition bias toward low complexity. Disordered stretches follow at residues 16-96 (LYNN…SGYN), 111-181 (KRSN…TTPL), 221-335 (NNSN…NNNK), and 409-515 (RIFG…NKRK). The segment covering 116–129 (LDDNMSVPTLQNFT) has biased composition (polar residues). Low complexity-rich tracts occupy residues 130 to 180 (NNNN…PTTP) and 221 to 260 (NNSN…NNNN). The segment covering 261–272 (QSIVPQSIHLQS) has biased composition (polar residues). The segment covering 273-334 (TTPQIQPLSL…NNSYNTNNNN (62 aa)) has biased composition (low complexity). The segment covering 425–434 (RPRRFRKSKV) has biased composition (basic residues). The span at 442 to 511 (HNNNNNNINN…GNGNTNSTNN (70 aa)) shows a compositional bias: low complexity. The GATA-type zinc-finger motif lies at 522–547 (CTSCGTTSSPEWRKGPAGNQSLCNAC). The segment at 619–650 (QQQQQQQQQQQNHHHQQLQQQQQQQQQQQLHH) is disordered.

Functionally, transcription factor that regulates morphogenetic cell movement during development. This Dictyostelium discoideum (Social amoeba) protein is GATA zinc finger domain-containing protein 11 (gtaK).